The following is a 547-amino-acid chain: Threonine synthase (547 aa).

K117 is modified (N6-(pyridoxal phosphate)lysine). The pyridoxal 5'-phosphate site is built by G272, N273, F274, D276, and T471.

The protein belongs to the threonine synthase family. Pyridoxal 5'-phosphate serves as cofactor.

It carries out the reaction O-phospho-L-homoserine + H2O = L-threonine + phosphate. Its pathway is amino-acid biosynthesis; L-threonine biosynthesis; L-threonine from L-aspartate: step 5/5. Functionally, catalyzes the gamma-elimination of phosphate from L-phosphohomoserine and the beta-addition of water to produce L-threonine. The protein is Threonine synthase of Cryptococcus neoformans var. grubii serotype A (strain H99 / ATCC 208821 / CBS 10515 / FGSC 9487) (Filobasidiella neoformans var. grubii).